Here is a 309-residue protein sequence, read N- to C-terminus: Taste receptor type 2 member 113 (309 aa).

At 1-10 (MVAVLQSTLP) the chain is on the extracellular side. Residues 11 to 31 (IIFSMEFIMGTLGNGFIFLIV) traverse the membrane as a helical segment. Residues 32–55 (CIDWVQRRKISLVDQIRTALAISR) lie on the Cytoplasmic side of the membrane. The helical transmembrane segment at 56–76 (IALIWLIFLDWWVSVHYPALH) threads the bilayer. Residues 77 to 80 (ETGK) are Extracellular-facing. The chain crosses the membrane as a helical span at residues 81-101 (MLSTYLISWTVINHCNFWLTA). The Cytoplasmic segment spans residues 102-127 (NLSILYFLKIANFSNIIFLYLKFRSK). A helical transmembrane segment spans residues 128–148 (NVVLVTLLVSLFFLFLNTVII). At 149–185 (KIFSDVCFDSVQRNVSQIFIMYNHEQICKFLSFTNPM) the chain is on the extracellular side. A glycan (N-linked (GlcNAc...) asparagine) is linked at N162. A helical membrane pass occupies residues 186-206 (FTFIPFVMSTVMFSLLIFSLW). At 207 to 229 (RHLKNMQHTAKGCRDISTTVHIR) the chain is on the cytoplasmic side. A helical transmembrane segment spans residues 230–250 (ALQTIIVSVVLYTIFFLSFFV). Residues 251-262 (KVWSFVSPERYL) are Extracellular-facing. A helical transmembrane segment spans residues 263–283 (IFLFVWALGNAVFSAHPFVMI). The Cytoplasmic portion of the chain corresponds to 284–309 (LVNRRLRLASLSLIFWLWYRFKNIEV).

Belongs to the G-protein coupled receptor T2R family.

Its subcellular location is the membrane. Its function is as follows. Putative taste receptor which may play a role in the perception of bitterness. This chain is Taste receptor type 2 member 113, found in Mus musculus (Mouse).